Here is a 317-residue protein sequence, read N- to C-terminus: Homoserine kinase (317 aa).

95-105 (PHSRGLGSSAA) contributes to the ATP binding site.

This sequence belongs to the GHMP kinase family. Homoserine kinase subfamily.

It localises to the cytoplasm. It carries out the reaction L-homoserine + ATP = O-phospho-L-homoserine + ADP + H(+). Its pathway is amino-acid biosynthesis; L-threonine biosynthesis; L-threonine from L-aspartate: step 4/5. Functionally, catalyzes the ATP-dependent phosphorylation of L-homoserine to L-homoserine phosphate. The polypeptide is Homoserine kinase (Mycolicibacterium smegmatis (strain ATCC 700084 / mc(2)155) (Mycobacterium smegmatis)).